Reading from the N-terminus, the 702-residue chain is Elongation factor G (702 aa).

Residues Thr-8–Thr-290 form the tr-type G domain. GTP is bound by residues Ala-17–Thr-24, Asp-88–His-92, and Asn-142–Asp-145.

This sequence belongs to the TRAFAC class translation factor GTPase superfamily. Classic translation factor GTPase family. EF-G/EF-2 subfamily.

It localises to the cytoplasm. Catalyzes the GTP-dependent ribosomal translocation step during translation elongation. During this step, the ribosome changes from the pre-translocational (PRE) to the post-translocational (POST) state as the newly formed A-site-bound peptidyl-tRNA and P-site-bound deacylated tRNA move to the P and E sites, respectively. Catalyzes the coordinated movement of the two tRNA molecules, the mRNA and conformational changes in the ribosome. This is Elongation factor G from Erwinia tasmaniensis (strain DSM 17950 / CFBP 7177 / CIP 109463 / NCPPB 4357 / Et1/99).